The primary structure comprises 303 residues: UDP-3-O-acyl-N-acetylglucosamine deacetylase (303 aa).

Zn(2+) contacts are provided by H78, H237, and D241. H264 functions as the Proton donor in the catalytic mechanism.

Belongs to the LpxC family. Requires Zn(2+) as cofactor.

The enzyme catalyses a UDP-3-O-[(3R)-3-hydroxyacyl]-N-acetyl-alpha-D-glucosamine + H2O = a UDP-3-O-[(3R)-3-hydroxyacyl]-alpha-D-glucosamine + acetate. It functions in the pathway glycolipid biosynthesis; lipid IV(A) biosynthesis; lipid IV(A) from (3R)-3-hydroxytetradecanoyl-[acyl-carrier-protein] and UDP-N-acetyl-alpha-D-glucosamine: step 2/6. Its function is as follows. Catalyzes the hydrolysis of UDP-3-O-myristoyl-N-acetylglucosamine to form UDP-3-O-myristoylglucosamine and acetate, the committed step in lipid A biosynthesis. This Pseudomonas fluorescens (strain SBW25) protein is UDP-3-O-acyl-N-acetylglucosamine deacetylase.